Here is a 203-residue protein sequence, read N- to C-terminus: MTTNLLDQMNTLVPMVVEQSNKGERAYDIYSRLLKERIIFLVGPINDNVASLVTAQLLFLESEDPKKEINLYINSPGGLVTAGLGIYDTMQYIKPDVSTLCIGQAASMGSFLLAAGKKGKRFSLPNSRIMVHQPSAGFQGQATDIEIHANEVLALKKRLNEIYSKHTGKSVDDVKKALERDNFMTPDTAKEFGLIDEVVENRS.

Ser-107 (nucleophile) is an active-site residue. The active site involves His-132.

It belongs to the peptidase S14 family. As to quaternary structure, fourteen ClpP subunits assemble into 2 heptameric rings which stack back to back to give a disk-like structure with a central cavity, resembling the structure of eukaryotic proteasomes.

It is found in the cytoplasm. It catalyses the reaction Hydrolysis of proteins to small peptides in the presence of ATP and magnesium. alpha-casein is the usual test substrate. In the absence of ATP, only oligopeptides shorter than five residues are hydrolyzed (such as succinyl-Leu-Tyr-|-NHMec, and Leu-Tyr-Leu-|-Tyr-Trp, in which cleavage of the -Tyr-|-Leu- and -Tyr-|-Trp bonds also occurs).. Its function is as follows. Cleaves peptides in various proteins in a process that requires ATP hydrolysis. Has a chymotrypsin-like activity. Plays a major role in the degradation of misfolded proteins. This chain is ATP-dependent Clp protease proteolytic subunit, found in Pelagibacter ubique (strain HTCC1062).